The chain runs to 325 residues: Beta-lactamase 1 (325 aa).

The N-terminal stretch at 1–26 (MRIRPTRRLLLGAVAPLALVPLVACG) is a signal peptide. A disordered region spans residues 30–50 (GSESGQQPGLGGCGTSAHGSA). Catalysis depends on Ser-93, which acts as the Acyl-ester intermediate. Position 270 to 272 (270 to 272 (KSG)) interacts with substrate.

Belongs to the class-A beta-lactamase family.

It carries out the reaction a beta-lactam + H2O = a substituted beta-amino acid. In Streptomyces cacaoi, this protein is Beta-lactamase 1 (blaL).